Reading from the N-terminus, the 268-residue chain is Eukaryotic translation initiation factor 2 subunit beta (268 aa).

The segment covering 1–12 (MADEINEIREEQ) has biased composition (basic and acidic residues). The segment at 1 to 85 (MADEINEIRE…LNNESVDAGE (85 aa)) is disordered. The residue at position 2 (Ala-2) is an N-acetylalanine. Ser-42, Ser-80, and Ser-112 each carry phosphoserine; by CK2. The C4-type zinc-finger motif lies at 222 to 246 (CLGCKSPDTILSKENRLFFLRCEKC).

This sequence belongs to the eIF-2-beta/eIF-5 family. As to quaternary structure, eukaryotic translation initiation factor 2 eIF2 is a heterotrimeric complex composed of an alpha, a beta and a gamma subunit. In terms of processing, phosphorylated at Ser-42, Ser-80 and Ser-112 by CK2.

The protein localises to the cytoplasm. The protein resides in the cytosol. Functionally, component of the eIF2 complex that functions in the early steps of protein synthesis by forming a ternary complex with GTP and initiator tRNA. This complex binds to a 40S ribosomal subunit, followed by mRNA binding to form a 43S pre-initiation complex (43S PIC). Junction of the 60S ribosomal subunit to form the 80S initiation complex is preceded by hydrolysis of the GTP bound to eIF2 and release of an eIF2-GDP binary complex. In order for eIF2 to recycle and catalyze another round of initiation, the GDP bound to eIF2 must exchange with GTP by way of a reaction catalyzed by eIF2B. The protein is Eukaryotic translation initiation factor 2 subunit beta of Arabidopsis thaliana (Mouse-ear cress).